We begin with the raw amino-acid sequence, 477 residues long: MWTALVLVWISSVPLSRSHTVPAVPRHLVTNKWPRAGKQNLSGDAVPRADNTSTLRAATVPPAPVTLTTGTWAATLNSTRVTAETTPHGTNTSTPTTREGTADSVTSRILAAPTSSSPSSVRQTLPTTIAGLPSLSTPRAEVPRTNASVSPRTAIATTVAPHTGTPTTGTVTAVSTVTPASGTVTAAVGTVTPAAGTVTAAVGTVTPAAGTVTAAVGTVTPAAVGTVTAAVGTVTSAAGTINTSDPHARTLSPAKSTPTNTSSRNPIPTSGAQTQGTTIQVTTDQPVHSTAGRPTPSPSNTTLEPNTPKSVASTSSAVVTTTQVQTKEPSASTVPVLPTSMSPEVEATSPTTQPSPLLPTQGTGGPGILLTTEQVGTKATAGTASAGPTSRSSGDVKVPTTASCQLSTQGQYLVVTTDPLTPSLVNKMFLLVVLIVGVTLFIAVLMMFALQAYESYKKKDYTQVDYLINGMYADSEM.

The first 18 residues, 1–18, serve as a signal peptide directing secretion; it reads MWTALVLVWISSVPLSRS. Residues 19–427 lie on the Extracellular side of the membrane; that stretch reads HTVPAVPRHL…DPLTPSLVNK (409 aa). N-linked (GlcNAc...) asparagine glycans are attached at residues N40, N51, and N77. Disordered regions lie at residues 79-103, 239-366, and 378-398; these read TRVT…GTAD, GTIN…TGGP, and KATA…DVKV. Positions 85-97 are enriched in low complexity; sequence TTPHGTNTSTPTT. 2 stretches are compositionally biased toward polar residues: residues 253 to 288 and 298 to 309; these read PAKS…QPVH and PSNTTLEPNTPK. N300 carries N-linked (GlcNAc...) asparagine glycosylation. Composition is skewed to low complexity over residues 310 to 326, 348 to 361, and 378 to 393; these read SVAS…QVQT, TSPT…LPTQ, and KATA…SRSS. Residues 428 to 448 traverse the membrane as a helical segment; sequence MFLLVVLIVGVTLFIAVLMMF. Topologically, residues 449-477 are cytoplasmic; that stretch reads ALQAYESYKKKDYTQVDYLINGMYADSEM.

Its subcellular location is the cell membrane. The protein localises to the golgi apparatus. The protein resides in the trans-Golgi network membrane. This is an uncharacterized protein from Rattus norvegicus (Rat).